Consider the following 159-residue polypeptide: D-aminoacyl-tRNA deacylase (159 aa).

Residues 146-147 (GP) carry the Gly-cisPro motif, important for rejection of L-amino acids motif.

The protein belongs to the DTD family. In terms of assembly, homodimer.

It localises to the cytoplasm. It catalyses the reaction glycyl-tRNA(Ala) + H2O = tRNA(Ala) + glycine + H(+). The catalysed reaction is a D-aminoacyl-tRNA + H2O = a tRNA + a D-alpha-amino acid + H(+). An aminoacyl-tRNA editing enzyme that deacylates mischarged D-aminoacyl-tRNAs. Also deacylates mischarged glycyl-tRNA(Ala), protecting cells against glycine mischarging by AlaRS. Acts via tRNA-based rather than protein-based catalysis; rejects L-amino acids rather than detecting D-amino acids in the active site. By recycling D-aminoacyl-tRNA to D-amino acids and free tRNA molecules, this enzyme counteracts the toxicity associated with the formation of D-aminoacyl-tRNA entities in vivo and helps enforce protein L-homochirality. This is D-aminoacyl-tRNA deacylase from Bifidobacterium adolescentis (strain ATCC 15703 / DSM 20083 / NCTC 11814 / E194a).